Reading from the N-terminus, the 399-residue chain is Phosphopentomutase (399 aa).

Mn(2+) is bound by residues aspartate 10, aspartate 296, histidine 301, aspartate 337, histidine 338, and histidine 349.

It belongs to the phosphopentomutase family. The cofactor is Mn(2+).

It is found in the cytoplasm. It catalyses the reaction 2-deoxy-alpha-D-ribose 1-phosphate = 2-deoxy-D-ribose 5-phosphate. The enzyme catalyses alpha-D-ribose 1-phosphate = D-ribose 5-phosphate. Its pathway is carbohydrate degradation; 2-deoxy-D-ribose 1-phosphate degradation; D-glyceraldehyde 3-phosphate and acetaldehyde from 2-deoxy-alpha-D-ribose 1-phosphate: step 1/2. Isomerase that catalyzes the conversion of deoxy-ribose 1-phosphate (dRib-1-P) and ribose 1-phosphate (Rib-1-P) to deoxy-ribose 5-phosphate (dRib-5-P) and ribose 5-phosphate (Rib-5-P), respectively. This Idiomarina loihiensis (strain ATCC BAA-735 / DSM 15497 / L2-TR) protein is Phosphopentomutase.